A 322-amino-acid polypeptide reads, in one-letter code: tRNA U34 carboxymethyltransferase (322 aa).

Carboxy-S-adenosyl-L-methionine contacts are provided by residues lysine 91, tryptophan 105, lysine 110, glycine 129, 179–180 (LE), methionine 195, tyrosine 199, and arginine 314.

Belongs to the class I-like SAM-binding methyltransferase superfamily. CmoB family. In terms of assembly, homotetramer.

The enzyme catalyses carboxy-S-adenosyl-L-methionine + 5-hydroxyuridine(34) in tRNA = 5-carboxymethoxyuridine(34) in tRNA + S-adenosyl-L-homocysteine + H(+). Its function is as follows. Catalyzes carboxymethyl transfer from carboxy-S-adenosyl-L-methionine (Cx-SAM) to 5-hydroxyuridine (ho5U) to form 5-carboxymethoxyuridine (cmo5U) at position 34 in tRNAs. The protein is tRNA U34 carboxymethyltransferase of Pseudomonas aeruginosa (strain LESB58).